The primary structure comprises 120 residues: Large ribosomal subunit protein bL12 (120 aa).

It belongs to the bacterial ribosomal protein bL12 family. As to quaternary structure, homodimer. Part of the ribosomal stalk of the 50S ribosomal subunit. Forms a multimeric L10(L12)X complex, where L10 forms an elongated spine to which 2 to 4 L12 dimers bind in a sequential fashion. Binds GTP-bound translation factors.

Functionally, forms part of the ribosomal stalk which helps the ribosome interact with GTP-bound translation factors. Is thus essential for accurate translation. This is Large ribosomal subunit protein bL12 from Lactobacillus acidophilus (strain ATCC 700396 / NCK56 / N2 / NCFM).